The primary structure comprises 629 residues: tRNA uridine 5-carboxymethylaminomethyl modification enzyme MnmG (629 aa).

FAD is bound at residue 13–18; it reads GGGHAG. 273-287 provides a ligand contact to NAD(+); the sequence is GPRYCPSIEDKIHRF.

It belongs to the MnmG family. Homodimer. Heterotetramer of two MnmE and two MnmG subunits. Requires FAD as cofactor.

It is found in the cytoplasm. In terms of biological role, NAD-binding protein involved in the addition of a carboxymethylaminomethyl (cmnm) group at the wobble position (U34) of certain tRNAs, forming tRNA-cmnm(5)s(2)U34. The chain is tRNA uridine 5-carboxymethylaminomethyl modification enzyme MnmG from Shewanella baltica (strain OS195).